Reading from the N-terminus, the 284-residue chain is Protein Ku (284 aa).

The Ku domain maps to 10–189; the sequence is TIGLVTVPVK…ELRSTEGIVP (180 aa).

In terms of assembly, homodimer. Interacts with host LigD.

Functionally, required for replication of viruses with short cos ends (4 bases). Stimulates dsDNA end-joining by host LigD. Binds dsDNA with either blunt, 5'- or 3-overhangs, protecting it from host exonuclease degradation. The chain is Protein Ku (87) from Mycobacterium phage Corndog (Mycobacteriophage Corndog).